Reading from the N-terminus, the 197-residue chain is dTTP/UTP pyrophosphatase (197 aa).

Catalysis depends on aspartate 70, which acts as the Proton acceptor.

It belongs to the Maf family. YhdE subfamily. Requires a divalent metal cation as cofactor.

It is found in the cytoplasm. It catalyses the reaction dTTP + H2O = dTMP + diphosphate + H(+). The enzyme catalyses UTP + H2O = UMP + diphosphate + H(+). In terms of biological role, nucleoside triphosphate pyrophosphatase that hydrolyzes dTTP and UTP. May have a dual role in cell division arrest and in preventing the incorporation of modified nucleotides into cellular nucleic acids. The chain is dTTP/UTP pyrophosphatase (yceF2) from Shigella boydii serotype 4 (strain Sb227).